A 127-amino-acid polypeptide reads, in one-letter code: Translation initiation factor 5A (127 aa).

Residue Lys-36 is modified to Hypusine.

It belongs to the eIF-5A family.

The protein localises to the cytoplasm. Functionally, functions by promoting the formation of the first peptide bond. This Halobacterium salinarum (strain ATCC 700922 / JCM 11081 / NRC-1) (Halobacterium halobium) protein is Translation initiation factor 5A (eif5a).